The primary structure comprises 475 residues: Aspartyl/glutamyl-tRNA(Asn/Gln) amidotransferase subunit B (475 aa).

The protein belongs to the GatB/GatE family. GatB subfamily. Heterotrimer of A, B and C subunits.

The catalysed reaction is L-glutamyl-tRNA(Gln) + L-glutamine + ATP + H2O = L-glutaminyl-tRNA(Gln) + L-glutamate + ADP + phosphate + H(+). It catalyses the reaction L-aspartyl-tRNA(Asn) + L-glutamine + ATP + H2O = L-asparaginyl-tRNA(Asn) + L-glutamate + ADP + phosphate + 2 H(+). Functionally, allows the formation of correctly charged Asn-tRNA(Asn) or Gln-tRNA(Gln) through the transamidation of misacylated Asp-tRNA(Asn) or Glu-tRNA(Gln) in organisms which lack either or both of asparaginyl-tRNA or glutaminyl-tRNA synthetases. The reaction takes place in the presence of glutamine and ATP through an activated phospho-Asp-tRNA(Asn) or phospho-Glu-tRNA(Gln). The polypeptide is Aspartyl/glutamyl-tRNA(Asn/Gln) amidotransferase subunit B (Staphylococcus carnosus (strain TM300)).